We begin with the raw amino-acid sequence, 333 residues long: Phosphate acyltransferase (333 aa).

Belongs to the PlsX family. As to quaternary structure, homodimer. Probably interacts with PlsY.

It localises to the cytoplasm. It carries out the reaction a fatty acyl-[ACP] + phosphate = an acyl phosphate + holo-[ACP]. It participates in lipid metabolism; phospholipid metabolism. Functionally, catalyzes the reversible formation of acyl-phosphate (acyl-PO(4)) from acyl-[acyl-carrier-protein] (acyl-ACP). This enzyme utilizes acyl-ACP as fatty acyl donor, but not acyl-CoA. In Pelagibacter ubique (strain HTCC1062), this protein is Phosphate acyltransferase.